Reading from the N-terminus, the 342-residue chain is 4-hydroxy-2-oxovalerate aldolase (342 aa).

Residues 7-257 enclose the Pyruvate carboxyltransferase domain; that stretch reads IWITEVALRD…KTGVDLYKMM (251 aa). 15-16 is a substrate binding site; the sequence is RD. Asp16 lines the Mn(2+) pocket. The Proton acceptor role is filled by His19. Substrate-binding residues include Ser169 and His196. Mn(2+) contacts are provided by His196 and His198. Substrate is bound at residue Tyr287.

The protein belongs to the 4-hydroxy-2-oxovalerate aldolase family.

The enzyme catalyses (S)-4-hydroxy-2-oxopentanoate = acetaldehyde + pyruvate. The chain is 4-hydroxy-2-oxovalerate aldolase (nbaI) from Geobacillus thermodenitrificans (strain NG80-2).